We begin with the raw amino-acid sequence, 42 residues long: Photosystem I reaction center subunit IX (42 aa).

The chain crosses the membrane as a helical span at residues 7–27 (YLSVAPVLSTLWFGSLAGLLI).

It belongs to the PsaJ family.

The protein localises to the plastid. It localises to the chloroplast thylakoid membrane. In terms of biological role, may help in the organization of the PsaE and PsaF subunits. The protein is Photosystem I reaction center subunit IX of Daucus carota (Wild carrot).